The chain runs to 341 residues: Eukaryotic translation initiation factor 2 subunit 1 (341 aa).

An S1 motif domain is found at 16 to 87 (EDVVMVNVLS…EKGYIDLSKR (72 aa)). Residue Ser-51 is modified to Phosphoserine. Positions 293–341 (AENAQVAGDDDEEDGADQEGMQFDPEKEFNHKGSGAGRANEEDEEEEED) are disordered. Over residues 300-309 (GDDDEEDGAD) the composition is skewed to acidic residues.

This sequence belongs to the eIF-2-alpha family. As to quaternary structure, eukaryotic translation initiation factor 2 eIF2 is a heterotrimeric complex composed of an alpha, a beta and a gamma subunit. Post-translationally, phosphorylation of eIF-2-alpha impairs the recycling of eIF-2 between successive rounds of initiation and thus leads to inhibition of translation.

Its subcellular location is the cytoplasm. It is found in the cytosol. Its function is as follows. eIF-2 functions in the early steps of protein synthesis by forming a ternary complex with GTP and initiator tRNA. This pre-initiation complex mediates ribosomal recognition of a start codon during the scanning process of the leader region. The chain is Eukaryotic translation initiation factor 2 subunit 1 from Drosophila melanogaster (Fruit fly).